Here is a 364-residue protein sequence, read N- to C-terminus: Urease accessory protein UreD (364 aa).

Disordered stretches follow at residues 1–37 (MDQD…SSPA) and 201–250 (PPEV…AGER). Low complexity-rich tracts occupy residues 21 to 37 (AGSA…SSPA), 209 to 218 (APDRGAPAAE), and 236 to 248 (AASS…APAG).

Belongs to the UreD family. As to quaternary structure, ureD, UreF and UreG form a complex that acts as a GTP-hydrolysis-dependent molecular chaperone, activating the urease apoprotein by helping to assemble the nickel containing metallocenter of UreC. The UreE protein probably delivers the nickel.

The protein resides in the cytoplasm. Its function is as follows. Required for maturation of urease via the functional incorporation of the urease nickel metallocenter. This chain is Urease accessory protein UreD, found in Kocuria rhizophila (strain ATCC 9341 / DSM 348 / NBRC 103217 / DC2201).